Reading from the N-terminus, the 466-residue chain is MVLAVLIGVLVGIVLVSSLLLRWNEVRYSRKQGLPPGTMGWPLFGETTEFLKQGPSFMKARRLRYGSLFRTHILGCPTVVCMDPELNRQMLQQGEGRGFVPGYPQSMLDILGRNNIAAVHGPLHRAMRGSMLALVRPASIRSSLLPKIDAFMRSHLHGWAGDLVDIQDKTKEMALLSALRQIAGITAGPLSDALKTELYTLVLGTISLPINLPGTSYYQGFQARKKLVSMLEKMIAERRSSGLVHNDMLDALLSGNDGTRERLSDEQIIDLIITLIYSGYETMSTTSMMAVKYLSDHPKALEELRKEHFDIRKGKSPEEAIDYNDFKSMTFTRAVIFETLRLATVVNGLLRKTTQDVEMNGYVIPKGWRIYVYTREINYDPCLYPDPMTFNPWRWLEKNMESHPHFMLFGGGGRMCPGKEVGTAEIATFLHYFVTRYRWEEEGTNTILKFPRVEAPNGLHIRVQNY.

A helical membrane pass occupies residues 1–21 (MVLAVLIGVLVGIVLVSSLLL). Cysteine 416 is a binding site for heme.

Belongs to the cytochrome P450 family. Requires heme as cofactor.

The protein localises to the membrane. It catalyses the reaction 6-deoxoteasterone + reduced [NADPH--hemoprotein reductase] + O2 = 6alpha-hydroxyteasterone + oxidized [NADPH--hemoprotein reductase] + H2O + H(+). The catalysed reaction is 6alpha-hydroxytyphasterol + reduced [NADPH--hemoprotein reductase] + O2 = teasterone + oxidized [NADPH--hemoprotein reductase] + 2 H2O + H(+). The enzyme catalyses 3-dehydro-6-deoxoteasterone + reduced [NADPH--hemoprotein reductase] + O2 = 3-dehydro-6alpha-hydroxyteasterone + oxidized [NADPH--hemoprotein reductase] + H2O + H(+). It carries out the reaction 3-dehydro-6alpha-hydroxyteasterone + reduced [NADPH--hemoprotein reductase] + O2 = 3-dehydroteasterone + oxidized [NADPH--hemoprotein reductase] + 2 H2O + H(+). It catalyses the reaction 6-deoxotyphasterol + reduced [NADPH--hemoprotein reductase] + O2 = 6alpha-hydroxytyphasterol + oxidized [NADPH--hemoprotein reductase] + H2O + H(+). The catalysed reaction is 6alpha-hydroxytyphasterol + reduced [NADPH--hemoprotein reductase] + O2 = typhasterol + oxidized [NADPH--hemoprotein reductase] + 2 H2O + H(+). The enzyme catalyses 6-deoxocastasterone + reduced [NADPH--hemoprotein reductase] + O2 = 6alpha-hydroxycastasterone + oxidized [NADPH--hemoprotein reductase] + H2O + H(+). It carries out the reaction 6alpha-hydroxycastasterone + reduced [NADPH--hemoprotein reductase] + O2 = castasterone + oxidized [NADPH--hemoprotein reductase] + 2 H2O + H(+). It catalyses the reaction 3-dehydro-6-deoxoteasterone + 2 reduced [NADPH--hemoprotein reductase] + 2 O2 = 3-dehydroteasterone + 2 oxidized [NADPH--hemoprotein reductase] + 3 H2O + 2 H(+). The catalysed reaction is 6-deoxocastasterone + 2 reduced [NADPH--hemoprotein reductase] + 2 O2 = castasterone + 2 oxidized [NADPH--hemoprotein reductase] + 3 H2O + 2 H(+). The enzyme catalyses 6-deoxoteasterone + 2 reduced [NADPH--hemoprotein reductase] + 2 O2 = teasterone + 2 oxidized [NADPH--hemoprotein reductase] + 3 H2O + 2 H(+). It carries out the reaction 6-deoxotyphasterol + 2 reduced [NADPH--hemoprotein reductase] + 2 O2 = typhasterol + 2 oxidized [NADPH--hemoprotein reductase] + 3 H2O + 2 H(+). It functions in the pathway plant hormone biosynthesis; brassinosteroid biosynthesis. Involved in reduction steps of the biosynthesis of plant campesterol-derivative steroids, ending to castasterone (CS) but missing brassinolide (BL). Catalyzes the C6-oxidation step in brassinosteroids biosynthesis; the conversion of 6-deoxoteasterone (6-deoxoTE) to teasterone (TE), 3-dehydro-6-deoxoteasterone (6-deoxo3DT, 6-deoxo-3-DHT) to 3-dehydroteasterone (3DT, 3-DHT), 6-deoxotyphasterol (6-deoxoTY) to typhasterol (TY) and of 6-deoxocastasterone (6-deoxoCS) to castasterone (CS). The protein is Cytochrome P450 85A1 of Brachypodium distachyon (Purple false brome).